The sequence spans 632 residues: Chaperone protein HtpG (632 aa).

The segment at 1-339 (MTQQTMSFQA…SSDLPLNVSR (339 aa)) is a; substrate-binding. The b stretch occupies residues 340-559 (EILQESRDVK…DNDMSGYLQR (220 aa)). The segment at 560–632 (MLKAAGQSAP…TNALLLSRAA (73 aa)) is c.

The protein belongs to the heat shock protein 90 family. In terms of assembly, homodimer.

It is found in the cytoplasm. Molecular chaperone. Has ATPase activity. In Burkholderia pseudomallei (strain 1106a), this protein is Chaperone protein HtpG.